A 374-amino-acid polypeptide reads, in one-letter code: Translocating chain-associated membrane protein 1 (374 aa).

The Cytoplasmic segment spans residues 1–32 (MAIRKKSNKNPPVLSHEFVLQNHADIVSCLAM). Residues 33–53 (LFLLGLMFEITAKGAIIFVAL) traverse the membrane as a helical segment. Residues 54-81 (QYNVTRPATEEQAAESASLYYYGIKDLA) lie on the Lumenal side of the membrane. A glycan (N-linked (GlcNAc...) asparagine) is linked at asparagine 56. The chain crosses the membrane as a helical span at residues 82 to 102 (TVFFYMLVAIIVHAIIQEYVL). Over 103 to 121 (DKINRRMHFSKTKHSKFNE) the chain is Cytoplasmic. The TLC domain maps to 117–326 (SKFNESGQLS…NFQLRRWREH (210 aa)). A helical transmembrane segment spans residues 122–142 (SGQLSAFYLFACVWGTFILVS). Residues 143–159 (ENYISDPTILWRAYPHN) lie on the Lumenal side of the membrane. The chain crosses the membrane as a helical span at residues 160 to 180 (LMTFQMKFFYISQLAYWLHAF). At 181–192 (PELYFQKTKKED) the chain is on the cytoplasmic side. The helical transmembrane segment at 193 to 213 (IPRQLVYIGLYLFHIAGAYLL) threads the bilayer. Position 214 (asparagine 214) is a topological domain, lumenal. A helical transmembrane segment spans residues 215–235 (LNHLGLVLLVLHYFVEFLFHI). Residues 236–251 (SRLFYFSDEKYQKGFS) lie on the Cytoplasmic side of the membrane. A helical membrane pass occupies residues 252-272 (LWAVLFVLGRLLTLILSVLTV). Topologically, residues 273–297 (GFGLARAENQKLDFSTGNFNVLAVR) are lumenal. Residues 298 to 318 (IAVLASICITQAFMMWKFINF) traverse the membrane as a helical segment. Over 319–374 (QLRRWREHSAFQAPPVKRKPAVTKGRSSRKGTENGVNGTVTSNGADSPRSRKEKSS) the chain is Cytoplasmic. The disordered stretch occupies residues 333 to 374 (PVKRKPAVTKGRSSRKGTENGVNGTVTSNGADSPRSRKEKSS). A compositionally biased stretch (basic residues) spans 334-347 (VKRKPAVTKGRSSR). The segment covering 352 to 363 (NGVNGTVTSNGA) has biased composition (polar residues). A Phosphoserine modification is found at serine 365.

The protein belongs to the TRAM family. As to quaternary structure, interacts with SEC61B. May interact with Derlin-1/DERL1. N-glycosylated.

Its subcellular location is the endoplasmic reticulum membrane. Involved in the translocation of nascent protein chains into or through the endoplasmic reticulum (ER) membrane by facilitating the proper chain positioning at the SEC61 channel. Regulates the exposure of nascent secretory protein chain to the cytosol during translocation into the ER. May affect the phospholipid bilayer in the vicinity of the lateral gate of the SEC61 channel, thereby facilitating ER protein transport. Intimately associates with transmembrane (TM) domain of nascent membrane proteins during the entire integration process into the ER membrane. Associates with the second TM domain of G-protein-coupled receptor opsin/OPSD nascent chain in the ER membrane, which may facilitate its integration into the membrane. Under conditions of ER stress, participates in the disposal of misfolded ER membrane proteins during the unfolded protein response (UPR), an integrated stress response (ISR) pathway, by selectively retrotranslocating misfolded ER-membrane proteins from the ER into the cytosol where they are ubiquitinated and degraded by the proteasome. This Rattus norvegicus (Rat) protein is Translocating chain-associated membrane protein 1.